The chain runs to 86 residues: Large ribosomal subunit protein bL31B (86 aa).

This sequence belongs to the bacterial ribosomal protein bL31 family. Type B subfamily. As to quaternary structure, part of the 50S ribosomal subunit.

In Erwinia tasmaniensis (strain DSM 17950 / CFBP 7177 / CIP 109463 / NCPPB 4357 / Et1/99), this protein is Large ribosomal subunit protein bL31B.